A 102-amino-acid polypeptide reads, in one-letter code: Large ribosomal subunit protein uL24 (102 aa).

The protein belongs to the universal ribosomal protein uL24 family. As to quaternary structure, part of the 50S ribosomal subunit.

One of two assembly initiator proteins, it binds directly to the 5'-end of the 23S rRNA, where it nucleates assembly of the 50S subunit. Functionally, one of the proteins that surrounds the polypeptide exit tunnel on the outside of the subunit. The sequence is that of Large ribosomal subunit protein uL24 from Allorhizobium ampelinum (strain ATCC BAA-846 / DSM 112012 / S4) (Agrobacterium vitis (strain S4)).